Reading from the N-terminus, the 89-residue chain is MSKDFIYICIILFISYITNNPDKKNFEDQLMVAIKKKKYSFLTNLSVKALLGQFTIYNFKIFSVAYFKDPLKPKATIHSFGFFGRWIFS.

This is an uncharacterized protein from Dictyostelium discoideum (Social amoeba).